Reading from the N-terminus, the 337-residue chain is MGIRENGIMLVSRERERARRLENRESIFAEPPCLLLAHRISPSPSILPAEEEVMDVSARKSQKAGREKLRREKLNEHFVELGNVLDPERPKNDKATILTDTVQLLKELTSEVNKLKSEYTALTDESRELTQEKNDLREEKTSLKSDIENLNLQYQQRLRSMSPWGAAMDHTVMMAPPPSFPYPMPIAMPPGSIPMHPSMPSYTYFGNQNPSMIPAPCPTYMPYMPPNTVVEQQSVHIPQNPGNRSREPRAKVSRESRSEKAEDSNEVATQLELKTPGSTSDKDTLQRPEKTKRCKRNNNNNSIEESSHSSKCSSSPSVRDHSSSSSVAGGQKPDDAK.

The region spanning 58–108 is the bHLH domain; that stretch reads ARKSQKAGREKLRREKLNEHFVELGNVLDPERPKNDKATILTDTVQLLKEL. The interval 235 to 337 is disordered; sequence VHIPQNPGNR…AGGQKPDDAK (103 aa). Basic and acidic residues-rich tracts occupy residues 244-263 and 280-291; these read RSRE…KAED and SDKDTLQRPEKT. Over residues 297–317 the composition is skewed to low complexity; that stretch reads NNNNNSIEESSHSSKCSSSPS.

Homodimer. Expressed constitutively in roots, leaves, stems, and flowers.

The protein localises to the nucleus. The protein is Transcription factor bHLH121 (BHLH121) of Arabidopsis thaliana (Mouse-ear cress).